Consider the following 306-residue polypeptide: Ribonuclease Z (306 aa).

Zn(2+)-binding residues include histidine 63, histidine 65, aspartate 67, histidine 68, histidine 141, aspartate 208, and histidine 266. The Proton acceptor role is filled by aspartate 67.

The protein belongs to the RNase Z family. Homodimer. Zn(2+) is required as a cofactor.

It carries out the reaction Endonucleolytic cleavage of RNA, removing extra 3' nucleotides from tRNA precursor, generating 3' termini of tRNAs. A 3'-hydroxy group is left at the tRNA terminus and a 5'-phosphoryl group is left at the trailer molecule.. In terms of biological role, zinc phosphodiesterase, which displays some tRNA 3'-processing endonuclease activity. Probably involved in tRNA maturation, by removing a 3'-trailer from precursor tRNA. The chain is Ribonuclease Z from Chlamydia abortus (strain DSM 27085 / S26/3) (Chlamydophila abortus).